Reading from the N-terminus, the 332-residue chain is Adenosine deaminase (332 aa).

Zn(2+)-binding residues include H12 and H14. 3 residues coordinate substrate: H14, D16, and G170. Residue H197 participates in Zn(2+) binding. The Proton donor role is filled by E200. D278 is a Zn(2+) binding site. D279 contacts substrate.

This sequence belongs to the metallo-dependent hydrolases superfamily. Adenosine and AMP deaminases family. Adenosine deaminase subfamily. Zn(2+) is required as a cofactor.

The catalysed reaction is adenosine + H2O + H(+) = inosine + NH4(+). It carries out the reaction 2'-deoxyadenosine + H2O + H(+) = 2'-deoxyinosine + NH4(+). In terms of biological role, catalyzes the hydrolytic deamination of adenosine and 2-deoxyadenosine. This is Adenosine deaminase from Yersinia enterocolitica serotype O:8 / biotype 1B (strain NCTC 13174 / 8081).